Reading from the N-terminus, the 331-residue chain is DSC E3 ubiquitin ligase complex subunit D (331 aa).

N-linked (GlcNAc...) asparagine glycosylation is present at N26. Helical transmembrane passes span 63–83 (ILIY…ILFA), 107–127 (PFIG…NFFT), and 159–179 (LFLL…LIVE). Positions 188-225 (STTSTEILRVQDHDSEERGVHRTRPESRSSVVGAELDE) are disordered. Residues 196 to 214 (RVQDHDSEERGVHRTRPES) are compositionally biased toward basic and acidic residues.

As to quaternary structure, component of the DSC E3 ubiquitin ligase complex composed of dscA, dscB, dscC and dscD.

The protein resides in the endoplasmic reticulum membrane. The protein operates within protein modification; protein ubiquitination. Its function is as follows. Component of the DSC E3 ubiquitin ligase complex which is required for the srbA transcriptional activator proteolytic cleavage to release the soluble transcription factor from the membrane in low oxygen or sterol conditions. Required for growth during hypoxia and triazole drug susceptibility, as well as for virulence in a murine model of invasive pulmonary aspergillosis (IPA). In Aspergillus fumigatus (strain ATCC MYA-4609 / CBS 101355 / FGSC A1100 / Af293) (Neosartorya fumigata), this protein is DSC E3 ubiquitin ligase complex subunit D.